Reading from the N-terminus, the 106-residue chain is 1-deoxy-D-xylulose 5-phosphate reductoisomerase (106 aa).

Asp3 is a binding site for Mn(2+). 1-deoxy-D-xylulose 5-phosphate-binding residues include Ser4, Glu5, Ser29, His52, Ser65, Asn70, Lys71, and Glu74. Glu5 serves as a coordination point for Mn(2+). Residue Glu74 participates in Mn(2+) binding.

This sequence belongs to the DXR family. Requires Mn(2+) as cofactor. Mg(2+) serves as cofactor.

Its subcellular location is the plastid. It is found in the chloroplast stroma. The catalysed reaction is 2-C-methyl-D-erythritol 4-phosphate + NADP(+) = 1-deoxy-D-xylulose 5-phosphate + NADPH + H(+). It participates in isoprenoid biosynthesis; isopentenyl diphosphate biosynthesis via DXP pathway; isopentenyl diphosphate from 1-deoxy-D-xylulose 5-phosphate: step 1/6. Enzyme of the plastid non-mevalonate pathway for isoprenoid biosynthesis that catalyzes the NADPH-dependent rearrangement and reduction of 1-deoxy-D-xylulose-5-phosphate (DXP) to 2-C-methyl-D-erythritol 4-phosphate (MEP). Required for chloroplast development. The protein is 1-deoxy-D-xylulose 5-phosphate reductoisomerase of Origanum vulgare (Wild marjoram).